We begin with the raw amino-acid sequence, 490 residues long: Velvet complex subunit 2 (490 aa).

Disordered stretches follow at residues 23–148 (LYHH…ESQQ) and 295–316 (YQTQ…TYGP). Over residues 54-70 (PPSHHFQLHPGHGHHQQ) the composition is skewed to basic residues. The span at 112–131 (AAEHRDHPQHALDEPSRSHD) shows a compositional bias: basic and acidic residues. A Velvet domain is found at 164–474 (ATGRRYHLDV…AAQGIKIPIR (311 aa)). A compositionally biased stretch (polar residues) spans 295–313 (YQTQPTYSQGSSAYPSNGT).

The protein belongs to the velvet family. VelB subfamily. Component of the heterotrimeric velvet complex composed of LAE1, VEL1 and VEL2; VEL1 acting as a bridging protein between LAE1 and VEL2. Forms a heterodimeric complex with VOS1; the formation of the VEL2-VOS1 complex is light-dependent.

The protein resides in the nucleus. It is found in the cytoplasm. In terms of biological role, component of the velvet transcription factor complex that controls sexual/asexual developmental ratio in response to light, promoting sexual development in the darkness while stimulating asexual sporulation under illumination. The velvet complex acts as a global regulator for secondary metabolite gene expression. Component of the VEL2-VOS1 heterodimeric complex that plays a dual role in activating genes associated with spore maturation and repressing certain development-associated genes. The VEL2-VOS1 complex binds DNA through the DNA-binding domain of VOS1 that recognizes an 11-nucleotide consensus sequence 5'-CTGGCCGCGGC-3' consisting of two motifs in the promoters of key developmental regulatory genes. Regulates expression of cellulase-encoding genes such as the cellobiohydrolase-encoding genes cbh1 and cbh2, the endo-beta-1,4-glucanase-encoding genes egl1 and egl2, and the beta-glucosidase-encoding gene bgl1. This is Velvet complex subunit 2 from Hypocrea jecorina (strain QM6a) (Trichoderma reesei).